The chain runs to 271 residues: Formamidopyrimidine-DNA glycosylase (271 aa).

The active-site Schiff-base intermediate with DNA is the Pro-2. The active-site Proton donor is Glu-3. Lys-58 (proton donor; for beta-elimination activity) is an active-site residue. DNA-binding residues include His-91, Arg-110, and Arg-152. An FPG-type zinc finger spans residues 237–271 (QIYGRSAHPCPICGTPIRLERIGQRASYYCTQCQH). The Proton donor; for delta-elimination activity role is filled by Arg-261.

It belongs to the FPG family. As to quaternary structure, monomer. Zn(2+) serves as cofactor.

The catalysed reaction is Hydrolysis of DNA containing ring-opened 7-methylguanine residues, releasing 2,6-diamino-4-hydroxy-5-(N-methyl)formamidopyrimidine.. It carries out the reaction 2'-deoxyribonucleotide-(2'-deoxyribose 5'-phosphate)-2'-deoxyribonucleotide-DNA = a 3'-end 2'-deoxyribonucleotide-(2,3-dehydro-2,3-deoxyribose 5'-phosphate)-DNA + a 5'-end 5'-phospho-2'-deoxyribonucleoside-DNA + H(+). Involved in base excision repair of DNA damaged by oxidation or by mutagenic agents. Acts as a DNA glycosylase that recognizes and removes damaged bases. Has a preference for oxidized purines, such as 7,8-dihydro-8-oxoguanine (8-oxoG). Has AP (apurinic/apyrimidinic) lyase activity and introduces nicks in the DNA strand. Cleaves the DNA backbone by beta-delta elimination to generate a single-strand break at the site of the removed base with both 3'- and 5'-phosphates. The protein is Formamidopyrimidine-DNA glycosylase of Nitrosococcus oceani (strain ATCC 19707 / BCRC 17464 / JCM 30415 / NCIMB 11848 / C-107).